A 470-amino-acid polypeptide reads, in one-letter code: 5-hydroxytryptamine receptor 2A (470 aa).

Topologically, residues 1-80 (MDILCEENTS…LQEKNWSALL (80 aa)) are extracellular. Asparagine 38 carries N-linked (GlcNAc...) asparagine glycosylation. Residues 81–97 (TAVVIILTIAGNILVIM) traverse the membrane as a helical segment. Over 98–111 (AVSLEKKLQNATNY) the chain is Cytoplasmic. Residues 112-137 (FLMSLAIADMLLGFLVMPVSTLTILY) traverse the membrane as a helical segment. Residues 138 to 146 (GYRWPLPSK) are Extracellular-facing. Residues 147–171 (LCAVWIYLDVLFSTASIMHLCAISL) traverse the membrane as a helical segment. An intrachain disulfide couples cysteine 148 to cysteine 227. Position 155 (aspartate 155) interacts with serotonin. Residues 172-174 (DRY) carry the DRY motif; important for ligand-induced conformation changes motif. At 172–191 (DRYVAIQNPIHHSRFNSRTK) the chain is on the cytoplasmic side. Residues 192–215 (AFLKIIAVWTISVGISMPIPVFGL) form a helical membrane-spanning segment. At 216 to 232 (QDDSKVFKEGSCLLADE) the chain is on the extracellular side. Residues 233 to 258 (NFVLIGSFVAFFIPLTIMVITYFLTI) form a helical membrane-spanning segment. Over 259–321 (KSLQKEATLC…QSISNEQKAC (63 aa)) the chain is Cytoplasmic. Serine 280 carries the post-translational modification Phosphoserine. The helical transmembrane segment at 322-347 (KVLGIVFFLFVVMWCPFFITNIMAVI) threads the bilayer. Asparagine 342 is a serotonin binding site. Cysteine 348 and cysteine 352 form a disulfide bridge. Residues 348 to 355 (CKESCNRD) lie on the Extracellular side of the membrane. A helical membrane pass occupies residues 356 to 381 (VIEALLNVFVWIGYLSSAVNPLVYTL). The NPxxY motif; important for ligand-induced conformation changes and signaling motif lies at 375 to 379 (NPLVY). Residues 382–470 (FNKTYRSAFS…NTVNEKVSCV (89 aa)) are Cytoplasmic-facing. Residues 424–470 (QMGPKKNSKKDDKTTDNDCTMVALGKEHPEDAPADSSNTVNEKVSCV) form a disordered region. The span at 458 to 470 (DSSNTVNEKVSCV) shows a compositional bias: polar residues. Positions 468 to 470 (SCV) match the PDZ-binding motif.

The protein belongs to the G-protein coupled receptor 1 family. Interacts (via C-terminus) with MPDZ and PATJ. May interact (via C-terminus) with MPP3, PRDX6, DLG4, DLG1, CASK, APBA1 and MAGI2. Interacts with GRM2 and DRD2; this may affect signaling.

It localises to the cell membrane. The protein localises to the cell projection. Its subcellular location is the dendrite. It is found in the axon. The protein resides in the cytoplasmic vesicle. It localises to the membrane. The protein localises to the caveola. Its subcellular location is the presynapse. With respect to regulation, G-protein coupled receptor activity is regulated by lipids: oleamide increases HTR2A-mediated activity. G-protein coupled receptor for 5-hydroxytryptamine (serotonin). Also functions as a receptor for various drugs and psychoactive substances, including mescaline, psilocybin, 1-(2,5-dimethoxy-4-iodophenyl)-2-aminopropane (DOI) and lysergic acid diethylamide (LSD). Ligand binding causes a conformation change that triggers signaling via guanine nucleotide-binding proteins (G proteins) and modulates the activity of downstream effectors. HTR2A is coupled to G(q)/G(11) G alpha proteins and activates phospholipase C-beta, releasing diacylglycerol (DAG) and inositol 1,4,5-trisphosphate (IP3) second messengers that modulate the activity of phosphatidylinositol 3-kinase and promote the release of Ca(2+) ions from intracellular stores, respectively. Beta-arrestin family members inhibit signaling via G proteins and mediate activation of alternative signaling pathways. Affects neural activity, perception, cognition and mood. Plays a role in the regulation of behavior, including responses to anxiogenic situations and psychoactive substances. Plays a role in intestinal smooth muscle contraction, and may play a role in arterial vasoconstriction. The chain is 5-hydroxytryptamine receptor 2A (HTR2A) from Bos taurus (Bovine).